Reading from the N-terminus, the 515-residue chain is Mucin-like protein Glc1.8b (515 aa).

Residues 1–20 (MSQITLIILVLAIGFSCTKS) form the signal peptide. Residues 21 to 467 (HPINSTRDGE…ANDIKKPAFP (447 aa)) are Extracellular-facing. N-linked (GlcNAc...) asparagine; by host glycans are attached at residues asparagine 24, asparagine 45, asparagine 51, asparagine 60, asparagine 85, asparagine 93, asparagine 102, asparagine 123, asparagine 129, asparagine 138, asparagine 180, asparagine 201, asparagine 207, asparagine 216, asparagine 258, asparagine 279, asparagine 285, asparagine 294, asparagine 319, asparagine 327, asparagine 336, asparagine 357, asparagine 363, asparagine 372, asparagine 397, asparagine 405, asparagine 413, asparagine 434, and asparagine 441. The interval 80 to 114 (SKKDENITGQSEINTSAKSQPINSTRDGEDSGTDL) is disordered. Over residues 86–104 (ITGQSEINTSAKSQPINST) the composition is skewed to polar residues. The tract at residues 314–358 (SKKDENITGQSEINTSAKSQPINSTRDGEDSGTDLKNLLTDPANT) is disordered. Polar residues predominate over residues 320–338 (ITGQSEINTSAKSQPINST). The interval 393-413 (RKDENVTGQSEFNISTNSNLN) is disordered. The chain crosses the membrane as a helical span at residues 468–488 (YCIILITFQIVTVGMIIYLVF). The Cytoplasmic portion of the chain corresponds to 489-515 (RTMRKPCQSERAIPLNSFGFGNNSSYE).

The protein belongs to the polydnaviridae Glc1.8 protein family.

Its subcellular location is the host membrane. Functionally, involved in suppression of the insect cellular immune response. Inhibits host hemocyte adhesion and phagocytosis. In Microplitis demolitor (Parasitoid wasp), this protein is Mucin-like protein Glc1.8b (O16).